The following is a 167-amino-acid chain: Mitochondrial fission 1 protein B (167 aa).

The stretch at 92-125 (REKLYLLALGYYRSGDFSRSRDCIERCLEVEPES) is one TPR repeat. A helical transmembrane segment spans residues 144 to 164 (VIGVGIAVTAVGVVAGIAAAI).

Belongs to the FIS1 family. Interacts with PEX11A, PEX11B, PEX11C, PEX11D and PEX11E.

It is found in the mitochondrion outer membrane. The protein resides in the peroxisome membrane. In terms of biological role, component of the peroxisomal and mitochondrial division machineries. Plays a role in promoting the fission of mitochondria and peroxisomes. In association with PEX11C, PEX11D, PEX11E and DRP3A, is involved in cell cycle-associated constitutive self-replication of preexisting peroxisomes. The chain is Mitochondrial fission 1 protein B (FIS1B) from Arabidopsis thaliana (Mouse-ear cress).